A 393-amino-acid chain; its full sequence is Putative bacilysin exporter BacE (393 aa).

Helical transmembrane passes span 11–31 (LLFG…ALLI), 43–63 (SGVI…GVLV), 69–89 (VKIM…LTFL), 92–112 (GEYP…GVFF), 133–155 (LFAK…FLLG), 160–177 (LAVA…FFIS), 215–235 (MFTM…FPIV), 244–264 (IGNF…AALV), 287–307 (ALFL…LFFI), and 353–373 (IVDA…LFLH).

Belongs to the major facilitator superfamily.

Its subcellular location is the cell membrane. Its function is as follows. Part of the bacilysin biosynthesis operon. May be involved in self-resistance to bacilysin by permitting efflux of this antibiotic. The protein is Putative bacilysin exporter BacE (bacE) of Bacillus amyloliquefaciens (Bacillus velezensis).